The sequence spans 130 residues: Small ribosomal subunit protein uS8 (130 aa).

This sequence belongs to the universal ribosomal protein uS8 family. In terms of assembly, part of the 30S ribosomal subunit. Contacts proteins S5 and S12.

In terms of biological role, one of the primary rRNA binding proteins, it binds directly to 16S rRNA central domain where it helps coordinate assembly of the platform of the 30S subunit. The sequence is that of Small ribosomal subunit protein uS8 from Phytoplasma australiense.